Here is a 327-residue protein sequence, read N- to C-terminus: ABC transporter periplasmic-binding protein YphF (327 aa).

Residues 1 to 26 (MPTKMRTTRNLLLMATLLGSALFARA) form the signal peptide.

It belongs to the bacterial solute-binding protein 2 family.

Its subcellular location is the periplasm. Functionally, probably part of the binding-protein-dependent transport system YphDEF. This Escherichia coli (strain K12) protein is ABC transporter periplasmic-binding protein YphF (yphF).